The following is an 86-amino-acid chain: Large ribosomal subunit protein eL31 (86 aa).

Belongs to the eukaryotic ribosomal protein eL31 family.

The chain is Large ribosomal subunit protein eL31 from Methanopyrus kandleri (strain AV19 / DSM 6324 / JCM 9639 / NBRC 100938).